Reading from the N-terminus, the 349-residue chain is Ribosomal RNA small subunit methyltransferase H 1 (349 aa).

Residues 79-81 (GGH), aspartate 99, phenylalanine 129, aspartate 148, and glutamine 155 contribute to the S-adenosyl-L-methionine site.

This sequence belongs to the methyltransferase superfamily. RsmH family.

It is found in the cytoplasm. It catalyses the reaction cytidine(1402) in 16S rRNA + S-adenosyl-L-methionine = N(4)-methylcytidine(1402) in 16S rRNA + S-adenosyl-L-homocysteine + H(+). Its function is as follows. Specifically methylates the N4 position of cytidine in position 1402 (C1402) of 16S rRNA. The sequence is that of Ribosomal RNA small subunit methyltransferase H 1 from Agathobacter rectalis (strain ATCC 33656 / DSM 3377 / JCM 17463 / KCTC 5835 / VPI 0990) (Eubacterium rectale).